A 1171-amino-acid polypeptide reads, in one-letter code: DNA-directed RNA polymerase subunit beta (1171 aa).

The protein belongs to the RNA polymerase beta chain family. The RNAP catalytic core consists of 2 alpha, 1 beta, 1 beta' and 1 omega subunit. When a sigma factor is associated with the core the holoenzyme is formed, which can initiate transcription.

The catalysed reaction is RNA(n) + a ribonucleoside 5'-triphosphate = RNA(n+1) + diphosphate. DNA-dependent RNA polymerase catalyzes the transcription of DNA into RNA using the four ribonucleoside triphosphates as substrates. The sequence is that of DNA-directed RNA polymerase subunit beta from Kineococcus radiotolerans (strain ATCC BAA-149 / DSM 14245 / SRS30216).